The primary structure comprises 418 residues: Gamma-glutamyl phosphate reductase (418 aa).

It belongs to the gamma-glutamyl phosphate reductase family.

It localises to the cytoplasm. It catalyses the reaction L-glutamate 5-semialdehyde + phosphate + NADP(+) = L-glutamyl 5-phosphate + NADPH + H(+). The protein operates within amino-acid biosynthesis; L-proline biosynthesis; L-glutamate 5-semialdehyde from L-glutamate: step 2/2. Catalyzes the NADPH-dependent reduction of L-glutamate 5-phosphate into L-glutamate 5-semialdehyde and phosphate. The product spontaneously undergoes cyclization to form 1-pyrroline-5-carboxylate. The polypeptide is Gamma-glutamyl phosphate reductase (Desulforapulum autotrophicum (strain ATCC 43914 / DSM 3382 / VKM B-1955 / HRM2) (Desulfobacterium autotrophicum)).